Here is a 67-residue protein sequence, read N- to C-terminus: Probable Sec-independent protein translocase protein TatE (67 aa).

Residues 4-21 (ISITKLLVVAALVVLLFG) traverse the membrane as a helical segment. The tract at residues 46 to 67 (EDAGAKKEAGGDIQAEKLSHKE) is disordered.

Belongs to the TatA/E family. TatE subfamily.

It is found in the cell inner membrane. Its function is as follows. Part of the twin-arginine translocation (Tat) system that transports large folded proteins containing a characteristic twin-arginine motif in their signal peptide across membranes. TatE shares overlapping functions with TatA. This chain is Probable Sec-independent protein translocase protein TatE, found in Citrobacter koseri (strain ATCC BAA-895 / CDC 4225-83 / SGSC4696).